The following is a 127-amino-acid chain: Putative truncated L-serine dehydratase YIL168W (127 aa).

Lysine 39 is modified (N6-(pyridoxal phosphate)lysine).

It belongs to the serine/threonine dehydratase family. The cofactor is pyridoxal 5'-phosphate.

The protein localises to the cytoplasm. The catalysed reaction is L-serine = pyruvate + NH4(+). It functions in the pathway carbohydrate biosynthesis; gluconeogenesis. The chain is Putative truncated L-serine dehydratase YIL168W from Saccharomyces cerevisiae (strain ATCC 204508 / S288c) (Baker's yeast).